The following is a 595-amino-acid chain: Guanylate-binding protein 3 (595 aa).

Residues Met-1–Cys-309 form a GTPase domain (Globular) region. Positions Thr-35–Lys-276 constitute a GB1/RHD3-type G domain. Residues Gly-45 to Ser-52, Leu-67 to Ser-69, and Asp-97 to Leu-101 contribute to the GTP site. Positions Glu-482–Ile-595 form a coiled coil.

This sequence belongs to the TRAFAC class dynamin-like GTPase superfamily. GB1/RHD3 GTPase family. GB1 subfamily. In terms of assembly, heterodimer with other family members, including GBP1, GBP2 and GBP5. Dimerization regulates subcellular location.

It is found in the cytoplasm. The protein localises to the perinuclear region. It localises to the golgi apparatus membrane. The catalysed reaction is GTP + H2O = GDP + phosphate + H(+). In terms of biological role, interferon (IFN)-inducible GTPase that plays important roles in innate immunity against a diverse range of bacterial, viral and protozoan pathogens. Hydrolyzes GTP very efficiently; GDP rather than GMP is the major reaction product. Following infection, recruited to the pathogen-containing vacuoles or vacuole-escaped bacteria and acts as a positive regulator of inflammasome assembly by promoting the release of inflammasome ligands from bacteria. Acts by promoting lysis of pathogen-containing vacuoles, releasing pathogens into the cytosol. Following pathogen release in the cytosol, promotes recruitment of proteins that mediate bacterial cytolysis: this liberates ligands that are detected by inflammasomes, such as lipopolysaccharide (LPS) that activates the non-canonical CASP4/CASP11 inflammasome or double-stranded DNA (dsDNA) that activates the AIM2 inflammasome. Exhibits antiviral activity against influenza virus. Its function is as follows. Shows the most prominent antiviral activity in epithelial cells. The sequence is that of Guanylate-binding protein 3 (GBP3) from Homo sapiens (Human).